The sequence spans 418 residues: Homeobox protein H2.0 (418 aa).

The segment covering 190–216 (QHQKQQHQQHHHHQHHPKHLHQQHKPP) has biased composition (basic residues). Disordered stretches follow at residues 190-223 (QHQKQQHQQHHHHQHHPKHLHQQHKPPPHNSTTA), 259-296 (TSPAAAAAATSQNGAHGHGGGNGQGNASAGSNGKRKRS), and 354-418 (RENL…NVVE). Residues 259 to 273 (TSPAAAAAATSQNGA) are compositionally biased toward low complexity. The segment at residues 295–354 (RSWSRAVFSNLQRKGLEIQFQQQKYITKPDRRKLAARLNLTDAQVKVWFQNRRMKWRHTR) is a DNA-binding region (homeobox). Over residues 391–403 (DYSSDSCSSVDLS) the composition is skewed to low complexity.

This sequence belongs to the H2.0 homeobox family. Expressed in cells of the visceral musculature and its anlagen.

The protein localises to the nucleus. May play a role in pattern formation during embryonic and imaginal development. Is not essential for visceral muscle morphogenesis. The chain is Homeobox protein H2.0 (H2.0) from Drosophila melanogaster (Fruit fly).